The primary structure comprises 432 residues: Dihydroorotase (432 aa).

Residues H60 and H62 each contribute to the Zn(2+) site. Substrate is bound by residues 62–64 (HLR) and N94. The Zn(2+) site is built by D152, H179, and H232. N278 contacts substrate. Zn(2+) is bound at residue D305. D305 is an active-site residue. Substrate contacts are provided by residues H309 and 323 to 324 (FG).

This sequence belongs to the metallo-dependent hydrolases superfamily. DHOase family. Class I DHOase subfamily. It depends on Zn(2+) as a cofactor.

It carries out the reaction (S)-dihydroorotate + H2O = N-carbamoyl-L-aspartate + H(+). It functions in the pathway pyrimidine metabolism; UMP biosynthesis via de novo pathway; (S)-dihydroorotate from bicarbonate: step 3/3. Its function is as follows. Catalyzes the reversible cyclization of carbamoyl aspartate to dihydroorotate. This chain is Dihydroorotase, found in Elusimicrobium minutum (strain Pei191).